A 734-amino-acid chain; its full sequence is Predicted GPI-anchored protein 49 (734 aa).

The first 16 residues, 1-16 (MNYITSLLLLSSNTFL), serve as a signal peptide directing secretion. N-linked (GlcNAc...) asparagine glycosylation is found at N27, N56, N68, and N71. Residues 78 to 145 (DNSDTDIDDS…NESDTQNEND (68 aa)) form a disordered region. Residues 87 to 98 (SSSNSEDVSSND) are compositionally biased toward low complexity. N-linked (GlcNAc...) asparagine glycans are attached at residues N105, N118, N136, and N180. The span at 110–129 (FSDESDEGNDSDDNGDEVEN) shows a compositional bias: acidic residues. Residues 130–141 (MENNQANESDTQ) show a composition bias toward polar residues. Disordered stretches follow at residues 216–262 (SPKS…LKSK) and 331–360 (DANP…RLPT). Residues 228 to 259 (SRKKTLKSKSKSKSSKLKHKSRKSHKRRPKLL) show a composition bias toward basic residues. 2 N-linked (GlcNAc...) asparagine glycosylation sites follow: N388 and N427. Positions 447-479 (PPRYSNHHSEFTVERPPRPSRTKKRPRIKAKKT) are disordered. The segment covering 453–463 (HHSEFTVERPP) has biased composition (basic and acidic residues). The segment covering 464-479 (RPSRTKKRPRIKAKKT) has biased composition (basic residues). An N-linked (GlcNAc...) asparagine glycan is attached at N517. The disordered stretch occupies residues 582–653 (KPQETKLHSP…STTSTKPNDQ (72 aa)). Positions 592-611 (TSTDTKSSKLMSSSSSNNNK) are enriched in low complexity. A compositionally biased stretch (polar residues) spans 620 to 631 (EYNQTQESTSYN). N-linked (GlcNAc...) asparagine glycans are attached at residues N622 and N631. The span at 632–650 (TTKAVPKTSVVSSTTSTKP) shows a compositional bias: low complexity. S707 carries the GPI-anchor amidated serine lipid modification. The propeptide at 708–734 (ASQNLSFSVLGLIILLLLLPGLLIIIM) is removed in mature form. N-linked (GlcNAc...) asparagine glycosylation occurs at N711.

The protein localises to the cell membrane. In Candida albicans (strain SC5314 / ATCC MYA-2876) (Yeast), this protein is Predicted GPI-anchored protein 49 (PGA49).